Consider the following 101-residue polypeptide: Small ribosomal subunit protein uS14A (101 aa).

The segment at 31-67 is disordered; the sequence is LRRPSSTEAERLAAQRELRRQPRDASPTRVRNRDQID. The span at 38–53 shows a compositional bias: basic and acidic residues; sequence EAERLAAQRELRRQPR.

Belongs to the universal ribosomal protein uS14 family. As to quaternary structure, part of the 30S ribosomal subunit. Contacts proteins S3 and S10.

Binds 16S rRNA, required for the assembly of 30S particles and may also be responsible for determining the conformation of the 16S rRNA at the A site. This Streptomyces coelicolor (strain ATCC BAA-471 / A3(2) / M145) protein is Small ribosomal subunit protein uS14A.